Consider the following 199-residue polypeptide: Putative acetyltransferase SAV2555 (199 aa).

The protein belongs to the transferase hexapeptide repeat family.

The polypeptide is Putative acetyltransferase SAV2555 (Staphylococcus aureus (strain Mu50 / ATCC 700699)).